A 302-amino-acid polypeptide reads, in one-letter code: Tyrosine recombinase XerC (302 aa).

In terms of domain architecture, Core-binding (CB) spans 2-89 (QPLMEQIRAF…AIRSFYRHLL (88 aa)). Residues 110 to 289 (RLPFHLDIDQ…SLDRLMEVYD (180 aa)) enclose the Tyr recombinase domain. Active-site residues include Arg-150, Lys-174, His-241, Arg-244, and His-267. Catalysis depends on Tyr-276, which acts as the O-(3'-phospho-DNA)-tyrosine intermediate.

The protein belongs to the 'phage' integrase family. XerC subfamily. As to quaternary structure, forms a cyclic heterotetrameric complex composed of two molecules of XerC and two molecules of XerD.

It is found in the cytoplasm. Its function is as follows. Site-specific tyrosine recombinase, which acts by catalyzing the cutting and rejoining of the recombining DNA molecules. The XerC-XerD complex is essential to convert dimers of the bacterial chromosome into monomers to permit their segregation at cell division. It also contributes to the segregational stability of plasmids. In Pelobacter propionicus (strain DSM 2379 / NBRC 103807 / OttBd1), this protein is Tyrosine recombinase XerC.